A 103-amino-acid chain; its full sequence is Small ribosomal subunit protein uS10c (103 aa).

The protein belongs to the universal ribosomal protein uS10 family. As to quaternary structure, part of the 30S ribosomal subunit.

The protein resides in the plastid. It is found in the chloroplast. Its function is as follows. Involved in the binding of tRNA to the ribosomes. This Trieres chinensis (Marine centric diatom) protein is Small ribosomal subunit protein uS10c.